A 1163-amino-acid chain; its full sequence is Hamartin (1163 aa).

K30 is covalently cross-linked (Glycyl lysine isopeptide (Lys-Gly) (interchain with G-Cter in ubiquitin)). Positions 295–316 (SSYVDTQNSYGGATSTPSSTSR) are enriched in polar residues. Disordered stretches follow at residues 295–337 (SSYV…STRP) and 353–594 (CGMT…QRGV). Positions 321 to 337 (STPGQLPQSLSSLSTRP) are enriched in low complexity. The span at 393-402 (TSPPPAPPCP) shows a compositional bias: pro residues. The tract at residues 403 to 787 (QDDCAHGPAS…QIRQLQHDRE (385 aa)) is mediates interaction with WDR45B. Positions 474–487 (EKDKEEAAISKELS) are enriched in basic and acidic residues. S487, S505, S511, S521, S595, and S598 each carry phosphoserine. Residues 512–530 (LSGSQRKTHSAASGTQGFS) show a composition bias toward polar residues. 2 coiled-coil regions span residues 721–919 (RKVI…LAKK) and 970–994 (EKDGRLQKLEEDRAEAAEAAEERLD). Positions 1008 to 1020 (NEEAAGHNGETRT) are enriched in basic and acidic residues. Residues 1008–1163 (NEEAAGHNGE…DYNETHHEHS (156 aa)) are disordered. Residues 1029–1046 (SCGGRVTGGSSSSSSELS) show a composition bias toward low complexity. A compositionally biased stretch (polar residues) spans 1066–1083 (EPSSSIPTTVGSLPSSKS). Positions 1088–1099 (KTRELFRNKSES) are enriched in basic and acidic residues. S1097 carries the post-translational modification Phosphoserine. Residues 1131–1146 (PPSLDAPHPSSPSSDS) are compositionally biased toward low complexity. Positions 1154–1163 (DYNETHHEHS) are enriched in basic and acidic residues.

As to quaternary structure, component of the TSC-TBC complex (also named Rhebulator complex), composed of 2 molecules of TSC1, 2 molecules of TSC2 and 1 molecule of TBC1D7. Probably forms a complex composed of chaperones HSP90 and HSP70, co-chaperones STIP1/HOP, CDC37, PPP5C, PTGES3/p23, TSC1 and client protein TSC2. Forms a complex composed of chaperones HSP90 and HSP70, co-chaperones CDC37, PPP5C, TSC1 and client protein TSC2, CDK4, AKT, RAF1 and NR3C1; this complex does not contain co-chaperones STIP1/HOP and PTGES3/p23. Forms a complex containing HSP90AA1, TSC1 and TSC2; TSC1 is required to recruit TCS2 to the complex. Interacts (via C-terminus) with the closed form of HSP90AA1 (via the middle domain and TPR repeat-binding motif). Interacts with DOCK7. Interacts with FBXW5. Interacts with WDR45B. Interacts with RPAP3 and URI1. Post-translationally, phosphorylation at Ser-505 does not affect interaction with TSC2. 'Lys-63'-linked ubiquitinated at Lys-30 by PELI1; the ubiquitination promotes TSC1/TSC2 complex stability. In terms of tissue distribution, highly expressed in brain, spleen and kidney, followed by liver and heart.

Its subcellular location is the lysosome membrane. The protein resides in the cytoplasm. It localises to the cytosol. Non-catalytic component of the TSC-TBC complex, a multiprotein complex that acts as a negative regulator of the canonical mTORC1 complex, an evolutionarily conserved central nutrient sensor that stimulates anabolic reactions and macromolecule biosynthesis to promote cellular biomass generation and growth. The TSC-TBC complex acts as a GTPase-activating protein (GAP) for the small GTPase RHEB, a direct activator of the protein kinase activity of mTORC1. In absence of nutrients, the TSC-TBC complex inhibits mTORC1, thereby preventing phosphorylation of ribosomal protein S6 kinase (RPS6KB1 and RPS6KB2) and EIF4EBP1 (4E-BP1) by the mTORC1 signaling. The TSC-TBC complex is inactivated in response to nutrients, relieving inhibition of mTORC1. Within the TSC-TBC complex, TSC1 stabilizes TSC2 and prevents TSC2 self-aggregation. Involved in microtubule-mediated protein transport via its ability to regulate mTORC1 signaling. Also acts as a co-chaperone for HSP90AA1 facilitating HSP90AA1 chaperoning of protein clients such as kinases, TSC2 and glucocorticoid receptor NR3C1. Increases ATP binding to HSP90AA1 and inhibits HSP90AA1 ATPase activity. Competes with the activating co-chaperone AHSA1 for binding to HSP90AA1, thereby providing a reciprocal regulatory mechanism for chaperoning of client proteins. Recruits TSC2 to HSP90AA1 and stabilizes TSC2 by preventing the interaction between TSC2 and ubiquitin ligase HERC1. In Rattus norvegicus (Rat), this protein is Hamartin.